Consider the following 293-residue polypeptide: Triosephosphate isomerase (293 aa).

25–27 (NWK) lines the substrate pocket. Residue H117 is the Electrophile of the active site. The Proton acceptor role is filled by E218.

This sequence belongs to the triosephosphate isomerase family. As to quaternary structure, homodimer.

The protein resides in the cytoplasm. It carries out the reaction D-glyceraldehyde 3-phosphate = dihydroxyacetone phosphate. It participates in carbohydrate biosynthesis; gluconeogenesis. The protein operates within carbohydrate degradation; glycolysis; D-glyceraldehyde 3-phosphate from glycerone phosphate: step 1/1. Functionally, involved in the gluconeogenesis. Catalyzes stereospecifically the conversion of dihydroxyacetone phosphate (DHAP) to D-glyceraldehyde-3-phosphate (G3P). This is Triosephosphate isomerase from Tropheryma whipplei (strain TW08/27) (Whipple's bacillus).